The chain runs to 216 residues: Serine acetyltransferase (216 aa).

The protein belongs to the transferase hexapeptide repeat family.

It localises to the cytoplasm. It catalyses the reaction L-serine + acetyl-CoA = O-acetyl-L-serine + CoA. It participates in amino-acid biosynthesis; L-cysteine biosynthesis; L-cysteine from L-serine: step 1/2. The chain is Serine acetyltransferase (cysE) from Staphylococcus xylosus.